Reading from the N-terminus, the 206-residue chain is Large ribosomal subunit protein uL4 (206 aa).

It belongs to the universal ribosomal protein uL4 family. Part of the 50S ribosomal subunit.

In terms of biological role, one of the primary rRNA binding proteins, this protein initially binds near the 5'-end of the 23S rRNA. It is important during the early stages of 50S assembly. It makes multiple contacts with different domains of the 23S rRNA in the assembled 50S subunit and ribosome. Functionally, forms part of the polypeptide exit tunnel. The chain is Large ribosomal subunit protein uL4 from Nitrobacter winogradskyi (strain ATCC 25391 / DSM 10237 / CIP 104748 / NCIMB 11846 / Nb-255).